The primary structure comprises 551 residues: 2,3-bisphosphoglycerate-independent phosphoglycerate mutase (551 aa).

The Mn(2+) site is built by Asp22 and Ser74. Ser74 acts as the Phosphoserine intermediate in catalysis. Substrate-binding positions include His135, 165–166, Arg201, Arg208, and 281–284; these read RD and RGDR. Asp319 provides a ligand contact to Mn(2+). Lys356 serves as a coordination point for substrate. Positions 424, 428, 465, 466, and 495 each coordinate Mn(2+).

This sequence belongs to the BPG-independent phosphoglycerate mutase family. As to quaternary structure, monomer. Requires Mn(2+) as cofactor.

The protein localises to the cytoplasm. It catalyses the reaction (2R)-2-phosphoglycerate = (2R)-3-phosphoglycerate. It functions in the pathway carbohydrate degradation; glycolysis; pyruvate from D-glyceraldehyde 3-phosphate: step 3/5. In terms of biological role, catalyzes the interconversion of 2-phosphoglycerate (2-PGA) and 3-phosphoglycerate (3-PGA). The sequence is that of 2,3-bisphosphoglycerate-independent phosphoglycerate mutase from Trypanosoma brucei brucei (strain 927/4 GUTat10.1).